A 333-amino-acid chain; its full sequence is Transaldolase (333 aa).

K135 serves as the catalytic Schiff-base intermediate with substrate.

This sequence belongs to the transaldolase family. Type 1 subfamily. In terms of assembly, homodimer.

It localises to the cytoplasm. It catalyses the reaction D-sedoheptulose 7-phosphate + D-glyceraldehyde 3-phosphate = D-erythrose 4-phosphate + beta-D-fructose 6-phosphate. The protein operates within carbohydrate degradation; pentose phosphate pathway; D-glyceraldehyde 3-phosphate and beta-D-fructose 6-phosphate from D-ribose 5-phosphate and D-xylulose 5-phosphate (non-oxidative stage): step 2/3. Its function is as follows. Transaldolase is important for the balance of metabolites in the pentose-phosphate pathway. In Prochlorococcus marinus (strain MIT 9301), this protein is Transaldolase.